Here is a 329-residue protein sequence, read N- to C-terminus: Ribonucleoside-diphosphate reductase subunit beta (329 aa).

Fe cation is bound by residues D66, E97, and H101. Y105 is a catalytic residue. Fe cation contacts are provided by E164, E198, and H201.

This sequence belongs to the ribonucleoside diphosphate reductase small chain family. As to quaternary structure, tetramer of two alpha and two beta subunits. Fe cation serves as cofactor.

It carries out the reaction a 2'-deoxyribonucleoside 5'-diphosphate + [thioredoxin]-disulfide + H2O = a ribonucleoside 5'-diphosphate + [thioredoxin]-dithiol. Its function is as follows. Provides the precursors necessary for DNA synthesis. Catalyzes the biosynthesis of deoxyribonucleotides from the corresponding ribonucleotides. This Bacillus pumilus (Bacillus mesentericus) protein is Ribonucleoside-diphosphate reductase subunit beta (bnrdF).